A 150-amino-acid chain; its full sequence is UPF0506 protein SJCHGC03144 (150 aa).

Positions 1-18 (MNTCIQLLILCLVTVINS) are cleaved as a signal peptide. Residues asparagine 20, asparagine 36, asparagine 52, and asparagine 110 are each glycosylated (N-linked (GlcNAc...) asparagine). 3 cysteine pairs are disulfide-bonded: cysteine 116-cysteine 130, cysteine 123-cysteine 134, and cysteine 129-cysteine 139.

The protein belongs to the UPF0506 family.

Its subcellular location is the secreted. In Schistosoma japonicum (Blood fluke), this protein is UPF0506 protein SJCHGC03144.